The sequence spans 398 residues: Probable pectate lyase P56 (398 aa).

Positions 1–27 are cleaved as a signal peptide; sequence MEYSYRTKINVLFIVLILFVFAALGTA. Asn-135 carries an N-linked (GlcNAc...) asparagine glycan. The Ca(2+) site is built by Asp-192, Asp-217, and Asp-221. A glycan (N-linked (GlcNAc...) asparagine) is linked at Asn-228. Arg-273 is an active-site residue.

Belongs to the polysaccharide lyase 1 family. It depends on Ca(2+) as a cofactor. Expressed in anthers and pollen.

It carries out the reaction Eliminative cleavage of (1-&gt;4)-alpha-D-galacturonan to give oligosaccharides with 4-deoxy-alpha-D-galact-4-enuronosyl groups at their non-reducing ends.. The protein operates within glycan metabolism; pectin degradation; 2-dehydro-3-deoxy-D-gluconate from pectin: step 2/5. Its function is as follows. Might be needed during pollen development and tube growth. In Solanum lycopersicum (Tomato), this protein is Probable pectate lyase P56 (LAT56).